A 152-amino-acid chain; its full sequence is Large-conductance mechanosensitive channel (152 aa).

A run of 2 helical transmembrane segments spans residues 14–34 (VIDL…VKSL) and 84–104 (VGQF…VFLL).

Belongs to the MscL family. Homopentamer.

The protein localises to the cell inner membrane. Functionally, channel that opens in response to stretch forces in the membrane lipid bilayer. May participate in the regulation of osmotic pressure changes within the cell. The polypeptide is Large-conductance mechanosensitive channel (Laribacter hongkongensis (strain HLHK9)).